The sequence spans 307 residues: F-box protein PP2-B7 (307 aa).

Residues 37-83 (PLSLGDLPEECISLIISFTSPRDACVFALVSKTFESAVQSDIVWEKF) enclose the F-box domain.

This is F-box protein PP2-B7 (PP2B7) from Arabidopsis thaliana (Mouse-ear cress).